A 420-amino-acid chain; its full sequence is Methionine aminopeptidase 2 (420 aa).

The interval M1–K48 is disordered. H172 contacts substrate. Positions 192, 203, and 272 each coordinate a divalent metal cation. H280 contacts substrate. Residues E305 and E401 each coordinate a divalent metal cation.

It belongs to the peptidase M24A family. Methionine aminopeptidase eukaryotic type 2 subfamily. Co(2+) serves as cofactor. Zn(2+) is required as a cofactor. The cofactor is Mn(2+). It depends on Fe(2+) as a cofactor.

The protein resides in the cytoplasm. The catalysed reaction is Release of N-terminal amino acids, preferentially methionine, from peptides and arylamides.. Cotranslationally removes the N-terminal methionine from nascent proteins. The N-terminal methionine is often cleaved when the second residue in the primary sequence is small and uncharged (Met-Ala-, Cys, Gly, Pro, Ser, Thr, or Val). The sequence is that of Methionine aminopeptidase 2 from Lachancea thermotolerans (strain ATCC 56472 / CBS 6340 / NRRL Y-8284) (Yeast).